The following is a 169-amino-acid chain: S-ribosylhomocysteine lyase (169 aa).

Residues His-54, His-58, and Cys-128 each coordinate Fe cation.

Belongs to the LuxS family. Homodimer. Requires Fe cation as cofactor.

The enzyme catalyses S-(5-deoxy-D-ribos-5-yl)-L-homocysteine = (S)-4,5-dihydroxypentane-2,3-dione + L-homocysteine. Involved in the synthesis of autoinducer 2 (AI-2) which is secreted by bacteria and is used to communicate both the cell density and the metabolic potential of the environment. The regulation of gene expression in response to changes in cell density is called quorum sensing. Catalyzes the transformation of S-ribosylhomocysteine (RHC) to homocysteine (HC) and 4,5-dihydroxy-2,3-pentadione (DPD). The polypeptide is S-ribosylhomocysteine lyase (Shewanella frigidimarina (strain NCIMB 400)).